The chain runs to 366 residues: GTP cyclohydrolase 1 type 2 homolog (366 aa).

Residues His64, His65, Asp102, His326, and Glu329 each coordinate Zn(2+).

It belongs to the GTP cyclohydrolase I type 2/NIF3 family. Homohexamer.

The protein is GTP cyclohydrolase 1 type 2 homolog of Staphylococcus aureus (strain MSSA476).